The following is a 411-amino-acid chain: DNA polymerase IV (411 aa).

Positions 18 to 211 (VVHVDMDCFY…LDVADLHGVG (194 aa)) constitute a UmuC domain. Residues Asp22 and Asp130 each coordinate Mg(2+). Glu131 is a catalytic residue. Disordered regions lie at residues 248–280 (FHRRARGADSRPVEPRGKPKSLSRESSFDGATE) and 376–411 (GFSGDETGDGGGHEGGACGGAGRGSCGGQTTLDEFT). Positions 253–274 (RGADSRPVEPRGKPKSLSRESS) are enriched in basic and acidic residues. The span at 384-402 (DGGGHEGGACGGAGRGSCG) shows a compositional bias: gly residues.

Belongs to the DNA polymerase type-Y family. Monomer. It depends on Mg(2+) as a cofactor.

Its subcellular location is the cytoplasm. It catalyses the reaction DNA(n) + a 2'-deoxyribonucleoside 5'-triphosphate = DNA(n+1) + diphosphate. Its function is as follows. Poorly processive, error-prone DNA polymerase involved in untargeted mutagenesis. Copies undamaged DNA at stalled replication forks, which arise in vivo from mismatched or misaligned primer ends. These misaligned primers can be extended by PolIV. Exhibits no 3'-5' exonuclease (proofreading) activity. May be involved in translesional synthesis. The protein is DNA polymerase IV of Halobacterium salinarum (strain ATCC 29341 / DSM 671 / R1).